Here is a 390-residue protein sequence, read N- to C-terminus: GTPase Obg (390 aa).

In terms of domain architecture, Obg spans 1-159 (MKFVDEAAIL…RDILLELLLL (159 aa)). One can recognise an OBG-type G domain in the interval 160–333 (ADVGMLGLPN…LCWDVMKFIN (174 aa)). GTP is bound by residues 166–173 (GLPNAGKS), 191–195 (FTTLV), 213–216 (DIPG), 283–286 (NKID), and 314–316 (SAV). The Mg(2+) site is built by serine 173 and threonine 193. The segment covering 366–384 (AEADDDWDDDWDEEDDEGV) has biased composition (acidic residues). The segment at 366–390 (AEADDDWDDDWDEEDDEGVEIIYQK) is disordered.

The protein belongs to the TRAFAC class OBG-HflX-like GTPase superfamily. OBG GTPase family. Monomer. The cofactor is Mg(2+).

The protein resides in the cytoplasm. Functionally, an essential GTPase which binds GTP, GDP and possibly (p)ppGpp with moderate affinity, with high nucleotide exchange rates and a fairly low GTP hydrolysis rate. Plays a role in control of the cell cycle, stress response, ribosome biogenesis and in those bacteria that undergo differentiation, in morphogenesis control. This Serratia proteamaculans (strain 568) protein is GTPase Obg.